A 222-amino-acid chain; its full sequence is Protein MKS1 (222 aa).

The interval 1-61 (MDPSEYFAGG…PNRDQPPPYI (61 aa)) is disordered. Over residues 12–21 (PSDQQNQKRQ) the composition is skewed to polar residues. Residue serine 30 is modified to Phosphoserine. Basic residues predominate over residues 37 to 46 (DSHKIKKPPK). Residues 47-61 (HPAPPPNRDQPPPYI) are compositionally biased toward pro residues. A Phosphoserine modification is found at serine 72. The short motif at 83–92 (FMNVVQRLTG) is the VQ element. The tract at residues 105–130 (GDVSPAARLASTENASPRGGKEPAAR) is disordered. Phosphoserine is present on residues serine 108 and serine 120.

Interacts with MPK4, WRKY25 and WRKY33. Phosphorylated on serine residue by MPK4.

It is found in the nucleus. Regulator of plant defense response. May contribute to MPK4-regulated defense activation by coupling the kinase to specific WRKY transcription factors. In Arabidopsis thaliana (Mouse-ear cress), this protein is Protein MKS1 (MKS1).